The primary structure comprises 842 residues: Elongation factor 2 (842 aa).

Positions 17–253 constitute a tr-type G domain; the sequence is TNVRNMSVIA…LWGDSYFNPK (237 aa). GTP contacts are provided by residues 26–33, 158–161, and 213–215; these read AHVDHGKS, NKVD, and SGL. Diphthamide is present on His699.

This sequence belongs to the TRAFAC class translation factor GTPase superfamily. Classic translation factor GTPase family. EF-G/EF-2 subfamily.

The protein resides in the cytoplasm. The catalysed reaction is GTP + H2O = GDP + phosphate + H(+). Catalyzes the GTP-dependent ribosomal translocation step during translation elongation. During this step, the ribosome changes from the pre-translocational (PRE) to the post-translocational (POST) state as the newly formed A-site-bound peptidyl-tRNA and P-site-bound deacylated tRNA move to the P and E sites, respectively. Catalyzes the coordinated movement of the two tRNA molecules, the mRNA and conformational changes in the ribosome. This Eremothecium gossypii (strain ATCC 10895 / CBS 109.51 / FGSC 9923 / NRRL Y-1056) (Yeast) protein is Elongation factor 2 (EFT1).